The following is a 63-amino-acid chain: Conotoxin Lt11.1 (63 aa).

The signal sequence occupies residues 1–23 (MMFRLTSVLLVIVLLNLVVLTNA). Disulfide bonds link cysteine 24/cysteine 34, cysteine 28/cysteine 39, cysteine 33/cysteine 42, and cysteine 38/cysteine 47. Residues 53-63 (ALLQRLLGHQR) constitute a propeptide that is removed on maturation.

Belongs to the conotoxin I2 superfamily. As to expression, expressed by the venom duct.

The protein resides in the secreted. The sequence is that of Conotoxin Lt11.1 from Conus litteratus (Lettered cone).